Reading from the N-terminus, the 159-residue chain is NADH-quinone oxidoreductase subunit I (159 aa).

4Fe-4S ferredoxin-type domains follow at residues 51-80 and 90-119; these read RRYENGEERCIACKLCEAICPAQAIVIESD and TRYDIDMTKCIYCGLCQEACPVDAIVEGPN. Cys60, Cys63, Cys66, Cys70, Cys99, Cys102, Cys105, and Cys109 together coordinate [4Fe-4S] cluster.

The protein belongs to the complex I 23 kDa subunit family. As to quaternary structure, NDH-1 is composed of 14 different subunits. Subunits NuoA, H, J, K, L, M, N constitute the membrane sector of the complex. Requires [4Fe-4S] cluster as cofactor.

It localises to the cell inner membrane. It carries out the reaction a quinone + NADH + 5 H(+)(in) = a quinol + NAD(+) + 4 H(+)(out). NDH-1 shuttles electrons from NADH, via FMN and iron-sulfur (Fe-S) centers, to quinones in the respiratory chain. The immediate electron acceptor for the enzyme in this species is believed to be ubiquinone. Couples the redox reaction to proton translocation (for every two electrons transferred, four hydrogen ions are translocated across the cytoplasmic membrane), and thus conserves the redox energy in a proton gradient. This chain is NADH-quinone oxidoreductase subunit I, found in Rickettsia prowazekii (strain Madrid E).